The chain runs to 1162 residues: Carbamoyl phosphate synthase large chain (1162 aa).

Residues 1–456 form a carboxyphosphate synthetic domain region; that stretch reads MPKRTDIKSI…SLQKALRGLE (456 aa). ATP is bound by residues Arg-129, Arg-222, Gly-228, Gly-229, Glu-261, Val-263, Glu-268, Gly-294, Val-295, His-296, Gln-338, and Glu-352. The ATP-grasp 1 domain maps to 186 to 381; it reads ETEWQLGEVE…IAKVAAKLAV (196 aa). Positions 338, 352, and 354 each coordinate Mg(2+). Mn(2+) is bound by residues Gln-338, Glu-352, and Asn-354. The interval 457–613 is oligomerization domain; sequence TGLTGFDEIA…PFVGQPRSEA (157 aa). The interval 614–1025 is carbamoyl phosphate synthetic domain; the sequence is EVSDRKKVVI…AFAKAQLGAG (412 aa). Residues 742–954 enclose the ATP-grasp 2 domain; that stretch reads QKLLIKLDLN…IAKVAARIMA (213 aa). Positions 778, 838, 840, 845, 870, 871, 872, 873, 913, and 925 each coordinate ATP. Residues Gln-913, Glu-925, and Asn-927 each contribute to the Mg(2+) site. The Mn(2+) site is built by Gln-913, Glu-925, and Asn-927. Residues 1026–1162 form the MGS-like domain; the sequence is VELPREGTVF…VRPLQDYFRS (137 aa). Positions 1026-1162 are allosteric domain; that stretch reads VELPREGTVF…VRPLQDYFRS (137 aa).

This sequence belongs to the CarB family. Composed of two chains; the small (or glutamine) chain promotes the hydrolysis of glutamine to ammonia, which is used by the large (or ammonia) chain to synthesize carbamoyl phosphate. Tetramer of heterodimers (alpha,beta)4. Mg(2+) serves as cofactor. The cofactor is Mn(2+).

The catalysed reaction is hydrogencarbonate + L-glutamine + 2 ATP + H2O = carbamoyl phosphate + L-glutamate + 2 ADP + phosphate + 2 H(+). The enzyme catalyses hydrogencarbonate + NH4(+) + 2 ATP = carbamoyl phosphate + 2 ADP + phosphate + 2 H(+). Its pathway is amino-acid biosynthesis; L-arginine biosynthesis; carbamoyl phosphate from bicarbonate: step 1/1. The protein operates within pyrimidine metabolism; UMP biosynthesis via de novo pathway; (S)-dihydroorotate from bicarbonate: step 1/3. In terms of biological role, large subunit of the glutamine-dependent carbamoyl phosphate synthetase (CPSase). CPSase catalyzes the formation of carbamoyl phosphate from the ammonia moiety of glutamine, carbonate, and phosphate donated by ATP, constituting the first step of 2 biosynthetic pathways, one leading to arginine and/or urea and the other to pyrimidine nucleotides. The large subunit (synthetase) binds the substrates ammonia (free or transferred from glutamine from the small subunit), hydrogencarbonate and ATP and carries out an ATP-coupled ligase reaction, activating hydrogencarbonate by forming carboxy phosphate which reacts with ammonia to form carbamoyl phosphate. The protein is Carbamoyl phosphate synthase large chain of Brucella suis biovar 1 (strain 1330).